Consider the following 140-residue polypeptide: Calcium-binding protein B (140 aa).

EF-hand domains lie at 38–73 and 74–109; these read ATLS…INQP and KTYL…KTSS. Asp51, Asn53, Ser55, Asp57, and Glu62 together coordinate Ca(2+).

The polypeptide is Calcium-binding protein B (cbpB) (Dictyostelium discoideum (Social amoeba)).